Consider the following 348-residue polypeptide: Dihydroorotase (348 aa).

2 residues coordinate Zn(2+): H14 and H16. Substrate is bound by residues 16-18 and N42; that span reads HLR. The Zn(2+) site is built by K100, H137, and H175. K100 carries the N6-carboxylysine modification. Position 137 (H137) interacts with substrate. L220 contacts substrate. D248 serves as a coordination point for Zn(2+). Residue D248 is part of the active site. 2 residues coordinate substrate: H252 and A264.

This sequence belongs to the metallo-dependent hydrolases superfamily. DHOase family. Class II DHOase subfamily. As to quaternary structure, homodimer. It depends on Zn(2+) as a cofactor.

The catalysed reaction is (S)-dihydroorotate + H2O = N-carbamoyl-L-aspartate + H(+). It participates in pyrimidine metabolism; UMP biosynthesis via de novo pathway; (S)-dihydroorotate from bicarbonate: step 3/3. Its function is as follows. Catalyzes the reversible cyclization of carbamoyl aspartate to dihydroorotate. This Pseudomonas paraeruginosa (strain DSM 24068 / PA7) (Pseudomonas aeruginosa (strain PA7)) protein is Dihydroorotase.